The sequence spans 475 residues: 3-isopropylmalate dehydratase large subunit (475 aa).

Cysteine 349, cysteine 409, and cysteine 412 together coordinate [4Fe-4S] cluster.

The protein belongs to the aconitase/IPM isomerase family. LeuC type 1 subfamily. Heterodimer of LeuC and LeuD. Requires [4Fe-4S] cluster as cofactor.

It carries out the reaction (2R,3S)-3-isopropylmalate = (2S)-2-isopropylmalate. The protein operates within amino-acid biosynthesis; L-leucine biosynthesis; L-leucine from 3-methyl-2-oxobutanoate: step 2/4. In terms of biological role, catalyzes the isomerization between 2-isopropylmalate and 3-isopropylmalate, via the formation of 2-isopropylmaleate. In Cereibacter sphaeroides (strain ATCC 17029 / ATH 2.4.9) (Rhodobacter sphaeroides), this protein is 3-isopropylmalate dehydratase large subunit.